The following is a 100-amino-acid chain: Urease subunit gamma (100 aa).

It belongs to the urease gamma subunit family. In terms of assembly, heterotrimer of UreA (gamma), UreB (beta) and UreC (alpha) subunits. Three heterotrimers associate to form the active enzyme.

Its subcellular location is the cytoplasm. It carries out the reaction urea + 2 H2O + H(+) = hydrogencarbonate + 2 NH4(+). The protein operates within nitrogen metabolism; urea degradation; CO(2) and NH(3) from urea (urease route): step 1/1. The polypeptide is Urease subunit gamma (Streptomyces coelicolor (strain ATCC BAA-471 / A3(2) / M145)).